Reading from the N-terminus, the 148-residue chain is UPF0758 protein YeeS (148 aa).

Positions alanine 26–leucine 148 constitute an MPN domain. Zn(2+) is bound by residues histidine 97, histidine 99, and aspartate 110. A JAMM motif motif is present at residues histidine 97–aspartate 110.

It belongs to the UPF0758 family.

The sequence is that of UPF0758 protein YeeS (yeeS) from Escherichia coli (strain K12).